We begin with the raw amino-acid sequence, 261 residues long: Tryptophan synthase alpha chain (261 aa).

Residues Glu-47 and Asp-58 each act as proton acceptor in the active site.

Belongs to the TrpA family. In terms of assembly, tetramer of two alpha and two beta chains.

The catalysed reaction is (1S,2R)-1-C-(indol-3-yl)glycerol 3-phosphate + L-serine = D-glyceraldehyde 3-phosphate + L-tryptophan + H2O. Its pathway is amino-acid biosynthesis; L-tryptophan biosynthesis; L-tryptophan from chorismate: step 5/5. The alpha subunit is responsible for the aldol cleavage of indoleglycerol phosphate to indole and glyceraldehyde 3-phosphate. This Neisseria gonorrhoeae (strain ATCC 700825 / FA 1090) protein is Tryptophan synthase alpha chain.